Here is a 213-residue protein sequence, read N- to C-terminus: Pyrrolidone-carboxylate peptidase (213 aa).

Active-site residues include glutamate 81, cysteine 144, and histidine 166.

This sequence belongs to the peptidase C15 family. As to quaternary structure, homodimer.

It is found in the cytoplasm. The enzyme catalyses Release of an N-terminal pyroglutamyl group from a polypeptide, the second amino acid generally not being Pro.. In terms of biological role, removes 5-oxoproline from various penultimate amino acid residues except L-proline. This chain is Pyrrolidone-carboxylate peptidase (pcp), found in Pseudomonas fluorescens.